The following is a 1479-amino-acid chain: Protein CHROMATIN REMODELING 20 (1479 aa).

Residues 19–49 adopt a coiled-coil conformation; sequence EVIVESKEDEMDIIIEENREAEQEVMEVKAR. Positions 40-55 are enriched in basic and acidic residues; it reads EQEVMEVKARDGRGEQ. Residues 40–109 are disordered; it reads EQEVMEVKAR…DELDLEKPLS (70 aa). The span at 76–86 shows a compositional bias: low complexity; it reads DASSRSESSDF. A compositionally biased stretch (basic and acidic residues) spans 94–109; it reads ILSRRDDELDLEKPLS. The stretch at 109 to 199 forms a coiled coil; it reads SEEEIDELIS…EQLDGAGIEL (91 aa). In terms of domain architecture, ADD spans 472-601; sequence RDDSQNPANN…KKSIELSSDS (130 aa). The GATA-type; atypical zinc finger occupies 483–514; the sequence is RCTACNKVAVEVHSHPLLEVIVCMDCKRSIED. The PHD-type; atypical zinc finger occupies 524 to 577; it reads ERHCEWCGHIADLIDCRTCEKLFCASCIKRNIGEEYMSEAQSSGWDCCCCSPIP. Residues 578-598 are a coiled coil; it reads LQRLTLELEKAMRDKKSIELS. The disordered stretch occupies residues 594-615; it reads SIELSSDSSSDSSSDNNSVDTD. Residues 598-615 are compositionally biased toward low complexity; it reads SSDSSSDSSSDNNSVDTD. A Helicase ATP-binding domain is found at 741–924; sequence VKSGDKGLGC…YCMVDFVREG (184 aa). 754–761 contributes to the ATP binding site; it reads HTMGLGKT. Positions 875-878 match the DEAH box motif; it reads DEAH. The 169-residue stretch at 1122 to 1290 folds into the Helicase C-terminal domain; the sequence is DILSMSADVG…QVHRTISKEE (169 aa). The tract at residues 1400–1423 is disordered; the sequence is SESPVVPKPSPSTQTEPLPQPKGF.

The protein belongs to the SNF2/RAD54 helicase family.

The protein resides in the nucleus. It is found in the chromosome. The protein localises to the telomere. Its function is as follows. Involved in transcriptional regulation and chromatin remodeling. Facilitates DNA replication in multiple cellular environments and is required for efficient replication of a subset of genomic loci. Binds to DNA tandem repeat sequences in both telomeres and euchromatin and in vitro binds DNA quadruplex structures. May help stabilizing G-rich regions into regular chromatin structures by remodeling G4 DNA and incorporating H3.3-containing nucleosomes. Involved in DNA repair of gamma-irradiation-mediated damages. In Arabidopsis thaliana (Mouse-ear cress), this protein is Protein CHROMATIN REMODELING 20.